Reading from the N-terminus, the 244-residue chain is Probable fimbrial assembly protein FimC, serogroup H1 (244 aa).

The protein is Probable fimbrial assembly protein FimC, serogroup H1 (fimC) of Dichelobacter nodosus (Bacteroides nodosus).